We begin with the raw amino-acid sequence, 101 residues long: Small ribosomal subunit protein uS14 (101 aa).

This sequence belongs to the universal ribosomal protein uS14 family. Part of the 30S ribosomal subunit. Contacts proteins S3 and S10.

Functionally, binds 16S rRNA, required for the assembly of 30S particles and may also be responsible for determining the conformation of the 16S rRNA at the A site. The chain is Small ribosomal subunit protein uS14 from Roseobacter denitrificans (strain ATCC 33942 / OCh 114) (Erythrobacter sp. (strain OCh 114)).